We begin with the raw amino-acid sequence, 172 residues long: Xanthine-guanine phosphoribosyltransferase (172 aa).

Residues 47–48 and 106–114 contribute to the 5-phospho-alpha-D-ribose 1-diphosphate site; these read RG and DDLVDTGKT. Asp107 contacts Mg(2+). 2 residues coordinate guanine: Asp110 and Ile153. Asp110 and Ile153 together coordinate xanthine. GMP contacts are provided by residues 110–114 and 152–153; these read DTGKT and WI.

It belongs to the purine/pyrimidine phosphoribosyltransferase family. XGPT subfamily. As to quaternary structure, homotetramer. The cofactor is Mg(2+).

Its subcellular location is the cell inner membrane. It catalyses the reaction GMP + diphosphate = guanine + 5-phospho-alpha-D-ribose 1-diphosphate. It carries out the reaction XMP + diphosphate = xanthine + 5-phospho-alpha-D-ribose 1-diphosphate. The enzyme catalyses IMP + diphosphate = hypoxanthine + 5-phospho-alpha-D-ribose 1-diphosphate. It functions in the pathway purine metabolism; GMP biosynthesis via salvage pathway; GMP from guanine: step 1/1. It participates in purine metabolism; XMP biosynthesis via salvage pathway; XMP from xanthine: step 1/1. Its function is as follows. Purine salvage pathway enzyme that catalyzes the transfer of the ribosyl-5-phosphate group from 5-phospho-alpha-D-ribose 1-diphosphate (PRPP) to the N9 position of the 6-oxopurines guanine and xanthine to form the corresponding ribonucleotides GMP (guanosine 5'-monophosphate) and XMP (xanthosine 5'-monophosphate), with the release of PPi. To a lesser extent, also acts on hypoxanthine. The chain is Xanthine-guanine phosphoribosyltransferase from Rhodopseudomonas palustris (strain BisB5).